The chain runs to 125 residues: Small ribosomal subunit protein eS8 (125 aa).

The protein belongs to the eukaryotic ribosomal protein eS8 family. In terms of assembly, part of the 30S ribosomal subunit.

This chain is Small ribosomal subunit protein eS8, found in Methanosarcina acetivorans (strain ATCC 35395 / DSM 2834 / JCM 12185 / C2A).